The following is a 190-amino-acid chain: TATA box-binding protein-like 1 (190 aa).

This sequence belongs to the TBP family. Binds TFIIA and TFIIB.

Its subcellular location is the cytoplasm. The protein resides in the nucleus. Part of a specialized transcription system that mediates the transcription of most ribosomal proteins through the 5'-TCT-3' motif which is a core promoter element at these genes. Seems to also mediate the transcription of NF1. Does not bind the TATA box. The chain is TATA box-binding protein-like 1 (TBPL1) from Pongo abelii (Sumatran orangutan).